We begin with the raw amino-acid sequence, 108 residues long: Kanamycin resistance protein (108 aa).

In terms of domain architecture, N-acetyltransferase spans 1–99 (SRTLLLERGR…PAVYMVQTRQ (99 aa)).

The sequence is that of Kanamycin resistance protein from Rhizobium radiobacter (Agrobacterium tumefaciens).